The chain runs to 317 residues: Transaldolase 1 (317 aa).

Lysine 132 serves as the catalytic Schiff-base intermediate with substrate.

The protein belongs to the transaldolase family. Type 1 subfamily. In terms of assembly, homodimer.

The protein localises to the cytoplasm. The catalysed reaction is D-sedoheptulose 7-phosphate + D-glyceraldehyde 3-phosphate = D-erythrose 4-phosphate + beta-D-fructose 6-phosphate. Its pathway is carbohydrate degradation; pentose phosphate pathway; D-glyceraldehyde 3-phosphate and beta-D-fructose 6-phosphate from D-ribose 5-phosphate and D-xylulose 5-phosphate (non-oxidative stage): step 2/3. Functionally, transaldolase is important for the balance of metabolites in the pentose-phosphate pathway. The polypeptide is Transaldolase 1 (Shigella sonnei (strain Ss046)).